We begin with the raw amino-acid sequence, 150 residues long: Large ribosomal subunit protein bL9 (150 aa).

Belongs to the bacterial ribosomal protein bL9 family.

In terms of biological role, binds to the 23S rRNA. In Burkholderia cenocepacia (strain HI2424), this protein is Large ribosomal subunit protein bL9.